Here is a 466-residue protein sequence, read N- to C-terminus: Probable Xaa-Pro aminopeptidase pepP (466 aa).

The Mn(2+) site is built by Asp264, Asp275, Glu398, and Glu438.

Belongs to the peptidase M24B family. The cofactor is Mn(2+).

It catalyses the reaction Release of any N-terminal amino acid, including proline, that is linked to proline, even from a dipeptide or tripeptide.. Functionally, catalyzes the removal of a penultimate prolyl residue from the N-termini of peptides. The chain is Probable Xaa-Pro aminopeptidase pepP (pepP) from Aspergillus niger (strain ATCC MYA-4892 / CBS 513.88 / FGSC A1513).